A 641-amino-acid polypeptide reads, in one-letter code: MMVESESIRSTPTSQNGVGSLPNQSDSCVGREGSGSGETNGELNPAELLHFQQQQALQMARQLLLQQATCLNSPSTDNKQPSVQVPVSVAMMSPQMITPQQMQQILSPAQLQAVLQQQQALMLQQLQEYYKKQQEQLHLQLLSQQQAGKQQPKELALGNKQLAFQQQLLQMQQLQQQHLINLQRQNLVGLQSGQGPVPMQSLPQVSPSDLHQLLKEMSSSQEESSKQDTVDLMTSITTSFPTTKVSPPTMHPSLSNGQNTRRESTSHYESSHLLYGHGECRWPGCEALCEDMGQFIKHLNTEHALDDRSTAQCRVQMQVVQQLEIQLAKESERLQAMMTHLHMRPSEPKPFSQPLNLVSSASNNKMSHDTFPDGLPQPPTSATAPITPLRQGTSVISSSSLPSVGPVRRRIVDKFCTPISSELAQNHEFYKNAEVRPPFTYASLIRQAILETPDRQLTLNEIYNWFTRMFAYFRRNTATWKNAVRHNLSLHKCFVRVENVKGAVWTVDELEYQKRRPPKMTGSPTLVKNMISGLGYSALNASYQAALAESSFPLLNSPPLHNSSGSVLHGGHDDVTSTGEPGNSNGSSPRLSPQYSQSIHVKEEPAEDDVRPASISAPTNQTTVLPEDRDLESESPMEDLP.

Disordered regions lie at residues 1-43 and 239-264; these read MMVE…NGEL and SFPT…RRES. Polar residues-rich tracts occupy residues 8–27 and 239–259; these read IRST…QSDS and SFPT…NGQN. Residues 278–303 form a C2H2-type zinc finger; sequence GECRWPGCEALCEDMGQFIKHLNTEH. Residues 320-341 form a leucine-zipper region; sequence VQQLEIQLAKESERLQAMMTHL. Residues 354–358 are ctbp1-binding; sequence PLNLV. A DNA-binding region (fork-head) is located at residues 436 to 526; that stretch reads RPPFTYASLI…PPKMTGSPTL (91 aa). The disordered stretch occupies residues 563–641; it reads SSGSVLHGGH…ESESPMEDLP (79 aa). The segment covering 576 to 599 has biased composition (polar residues); it reads TSTGEPGNSNGSSPRLSPQYSQSI. A compositionally biased stretch (basic and acidic residues) spans 600–611; it reads HVKEEPAEDDVR. Over residues 629 to 641 the composition is skewed to acidic residues; it reads RDLESESPMEDLP.

As to quaternary structure, dimerization is required for DNA-binding. First expressed in the anterior neural field of stage 15 embryos. At stage 18, localized in three domains of the brain (rostral forebrain, midbrain and hindbrain) and in the eye anlage. Cerebral and retinal expression persists at later stages with additional expression in the branchial arches, at the base of the hatching gland, and in the pancreas.

Its subcellular location is the nucleus. Functionally, transcriptional repressor. This chain is Forkhead box protein P4, found in Xenopus laevis (African clawed frog).